The chain runs to 274 residues: Large ribosomal subunit protein bL28m (274 aa).

Residues 249–274 (SETEEFGLGQEEDLFMKEEPKPTKMA) are disordered. Basic and acidic residues predominate over residues 262-274 (LFMKEEPKPTKMA).

This sequence belongs to the bacterial ribosomal protein bL28 family. Component of the mitochondrial large ribosomal subunit (mt-LSU). Mature N.crassa 74S mitochondrial ribosomes consist of a small (37S) and a large (54S) subunit. The 37S small subunit contains a 16S ribosomal RNA (16S mt-rRNA) and 32 different proteins. The 54S large subunit contains a 23S rRNA (23S mt-rRNA) and 42 different proteins.

The protein resides in the mitochondrion. Functionally, component of the mitochondrial ribosome (mitoribosome), a dedicated translation machinery responsible for the synthesis of mitochondrial genome-encoded proteins, including at least some of the essential transmembrane subunits of the mitochondrial respiratory chain. The mitoribosomes are attached to the mitochondrial inner membrane and translation products are cotranslationally integrated into the membrane. This chain is Large ribosomal subunit protein bL28m (mrpl24), found in Neurospora crassa (strain ATCC 24698 / 74-OR23-1A / CBS 708.71 / DSM 1257 / FGSC 987).